A 251-amino-acid polypeptide reads, in one-letter code: Putative (5-formylfuran-3-yl)methyl phosphate synthase (251 aa).

Lys-29 acts as the Schiff-base intermediate with substrate in catalysis. Lys-87 functions as the Proton acceptor in the catalytic mechanism.

It belongs to the MfnB family.

It carries out the reaction 2 D-glyceraldehyde 3-phosphate = 4-(hydroxymethyl)-2-furancarboxaldehyde phosphate + phosphate + 2 H2O. Its function is as follows. Catalyzes the formation of 4-(hydroxymethyl)-2-furancarboxaldehyde phosphate (4-HFC-P) from two molecules of glyceraldehyde-3-P (GA-3-P). In Kitasatospora aureofaciens (Streptomyces aureofaciens), this protein is Putative (5-formylfuran-3-yl)methyl phosphate synthase.